Reading from the N-terminus, the 863-residue chain is Paramyosin (863 aa).

Residues 1 to 18 (MSESHVKISRTIIRGTSP) form a nonhelical region region. The stretch at 19–836 (STVRLESRVR…ERTITIKRTI (818 aa)) forms a coiled coil. The segment at 837–863 (GGPGSRAVSVVREINSVSRGNRATSIM) is nonhelical region.

It belongs to the paramyosin family. As to quaternary structure, homodimer or monomer in secreted form.

It localises to the cytoplasm. It is found in the myofibril. The protein resides in the secreted. Its function is as follows. Paramyosin is a major structural component of many thick filaments isolated from invertebrate muscles. It is a prominent antigen in human cysticercosis, may have a role as a modulator of the host immune response. It is able to bind collagen and has complement inhibitor activity. The polypeptide is Paramyosin (PMY) (Taenia solium (Pork tapeworm)).